Reading from the N-terminus, the 297-residue chain is Protein-methionine-sulfoxide reductase catalytic subunit MsrP (297 aa).

Residues 1–35 constitute a signal peptide (tat-type signal); the sequence is MLITPEKLYKQRRNFLKLGAGALISSSVLASKLSA. Mo-molybdopterin is bound by residues 62 to 63, Cys-116, Thr-151, Asn-201, Arg-206, and 217 to 219; these read YE and SIK.

This sequence belongs to the MsrP family. In terms of assembly, heterodimer of a catalytic subunit (MsrP) and a heme-binding subunit (MsrQ). The cofactor is Mo-molybdopterin. Post-translationally, predicted to be exported by the Tat system. The position of the signal peptide cleavage has not been experimentally proven.

It is found in the periplasm. It carries out the reaction L-methionyl-[protein] + a quinone + H2O = L-methionyl-(S)-S-oxide-[protein] + a quinol. The enzyme catalyses L-methionyl-[protein] + a quinone + H2O = L-methionyl-(R)-S-oxide-[protein] + a quinol. Part of the MsrPQ system that repairs oxidized periplasmic proteins containing methionine sulfoxide residues (Met-O), using respiratory chain electrons. Thus protects these proteins from oxidative-stress damage caused by reactive species of oxygen and chlorine generated by the host defense mechanisms. MsrPQ is essential for the maintenance of envelope integrity under bleach stress, rescuing a wide series of structurally unrelated periplasmic proteins from methionine oxidation. The catalytic subunit MsrP is non-stereospecific, being able to reduce both (R-) and (S-) diastereoisomers of methionine sulfoxide. The protein is Protein-methionine-sulfoxide reductase catalytic subunit MsrP of Campylobacter jejuni subsp. jejuni serotype O:2 (strain ATCC 700819 / NCTC 11168).